Reading from the N-terminus, the 196-residue chain is Probable phosphoheptose isomerase (196 aa).

The SIS domain maps to 43–196; it reads IVNVFNSGGK…MICSVIDSYY (154 aa). 58–60 is a binding site for substrate; sequence NGG. Zn(2+)-binding residues include H67 and E71. Substrate-binding positions include E71, 100–101, 126–128, S131, and Q178; these read ND and STS. Residues Q178 and H186 each coordinate Zn(2+).

The protein belongs to the SIS family. GmhA subfamily. Requires Zn(2+) as cofactor.

The protein resides in the cytoplasm. The catalysed reaction is 2 D-sedoheptulose 7-phosphate = D-glycero-alpha-D-manno-heptose 7-phosphate + D-glycero-beta-D-manno-heptose 7-phosphate. Its pathway is carbohydrate biosynthesis; D-glycero-D-manno-heptose 7-phosphate biosynthesis; D-glycero-alpha-D-manno-heptose 7-phosphate and D-glycero-beta-D-manno-heptose 7-phosphate from sedoheptulose 7-phosphate: step 1/1. Functionally, catalyzes the isomerization of sedoheptulose 7-phosphate in D-glycero-D-manno-heptose 7-phosphate. The polypeptide is Probable phosphoheptose isomerase (Thermoplasma volcanium (strain ATCC 51530 / DSM 4299 / JCM 9571 / NBRC 15438 / GSS1)).